A 388-amino-acid polypeptide reads, in one-letter code: Leucine aminopeptidase 1 (388 aa).

An N-terminal signal peptide occupies residues 1–19; sequence MKVLTAIALSAIAFTGAVA. Residues 20–88 constitute a propeptide that is removed on maturation; that stretch reads AVITQEAFLN…YPTLHSASYV (69 aa). Residues Asn-106 and Asn-180 are each glycosylated (N-linked (GlcNAc...) asparagine). The Zn(2+) site is built by His-188 and Asp-207. The N-linked (GlcNAc...) asparagine glycan is linked to Asn-232. Glu-246 and Asp-273 together coordinate Zn(2+). An intrachain disulfide couples Cys-322 to Cys-326. His-355 is a Zn(2+) binding site.

Belongs to the peptidase M28 family. M28E subfamily. As to quaternary structure, monomer. Requires Zn(2+) as cofactor.

The protein resides in the secreted. Its function is as follows. Extracellular aminopeptidase that allows assimilation of proteinaceous substrates and which contributes to pathogenicity. In Aspergillus fumigatus (strain CBS 144.89 / FGSC A1163 / CEA10) (Neosartorya fumigata), this protein is Leucine aminopeptidase 1 (lap1).